The chain runs to 432 residues: Succinate--CoA ligase [GDP-forming] subunit beta, mitochondrial (432 aa).

The N-terminal 37 residues, 1–37 (MASPVAAQAGKLLRALALRPRFLAAGSQAVQLTSRRW), are a transit peptide targeting the mitochondrion. The ATP-grasp domain maps to 46-274 (KKLMSDNGVR…NAEFRQKDIF (229 aa)). Residue glutamine 57 participates in GTP binding. Residue lysine 73 is modified to N6-acetyllysine. An N6-succinyllysine modification is found at lysine 78. GTP is bound at residue 90–92 (GRG). Lysine 132 and lysine 139 each carry N6-acetyllysine. Leucine 146 lines the GTP pocket. Phosphoserine is present on serine 161. Lysine 200, lysine 218, and lysine 227 each carry N6-acetyllysine. Mg(2+) contacts are provided by asparagine 243 and aspartate 257. Residues lysine 271 and lysine 291 each carry the N6-acetyllysine modification. A substrate-binding site is contributed by asparagine 308. N6-succinyllysine is present on lysine 338. The residue at position 347 (lysine 347) is an N6-acetyllysine. 365 to 367 (GIV) is a substrate binding site. N6-acetyllysine occurs at positions 386 and 423.

This sequence belongs to the succinate/malate CoA ligase beta subunit family. GTP-specific subunit beta subfamily. Heterodimer of an alpha and a beta subunit. The beta subunit determines specificity for GTP. Mg(2+) serves as cofactor. Mainly expressed in liver, kidney, heart, spleen and skeletal muscle. Also found in intestine and colon, and in low amounts in lung, brain, prostate, testis and ovary.

The protein localises to the mitochondrion. The enzyme catalyses GTP + succinate + CoA = succinyl-CoA + GDP + phosphate. It functions in the pathway carbohydrate metabolism; tricarboxylic acid cycle; succinate from succinyl-CoA (ligase route): step 1/1. In terms of biological role, GTP-specific succinyl-CoA synthetase functions in the citric acid cycle (TCA), coupling the hydrolysis of succinyl-CoA to the synthesis of GTP and thus represents the only step of substrate-level phosphorylation in the TCA. The beta subunit provides nucleotide specificity of the enzyme and binds the substrate succinate, while the binding sites for coenzyme A and phosphate are found in the alpha subunit. The sequence is that of Succinate--CoA ligase [GDP-forming] subunit beta, mitochondrial from Homo sapiens (Human).